The sequence spans 128 residues: MAIWQGASRRLSTGAKVWRAAKKHKREMGRPAAETQVSEVIKRKIVRCRGANLKVKLEKTNYANVFDQANNVCKKVAVTKVLDNKANKHYIRRNVMTKGAIIETEMGKAKVTSRPGQDGVVNAVLITE.

This sequence belongs to the eukaryotic ribosomal protein eS8 family. Part of the 30S ribosomal subunit.

The chain is Small ribosomal subunit protein eS8 from Methanococcus maripaludis (strain C5 / ATCC BAA-1333).